The following is a 394-amino-acid chain: Elongation factor Tu (394 aa).

In terms of domain architecture, tr-type G spans 10–204 (KPHINVGTIG…HLDNYIPEPK (195 aa)). A G1 region spans residues 19–26 (GHVDHGKT). Position 19-26 (19-26 (GHVDHGKT)) interacts with GTP. Residue Thr-26 participates in Mg(2+) binding. The G2 stretch occupies residues 60–64 (GITIN). The segment at 81–84 (DCPG) is G3. GTP is bound by residues 81–85 (DCPGH) and 136–139 (NKCD). Residues 136–139 (NKCD) form a G4 region. The interval 174–176 (SAL) is G5.

This sequence belongs to the TRAFAC class translation factor GTPase superfamily. Classic translation factor GTPase family. EF-Tu/EF-1A subfamily. Monomer.

The protein resides in the cytoplasm. It catalyses the reaction GTP + H2O = GDP + phosphate + H(+). In terms of biological role, GTP hydrolase that promotes the GTP-dependent binding of aminoacyl-tRNA to the A-site of ribosomes during protein biosynthesis. The sequence is that of Elongation factor Tu from Wigglesworthia glossinidia brevipalpis.